The following is a 257-amino-acid chain: Zinc transporter ZupT (257 aa).

8 consecutive transmembrane segments (helical) span residues 5–25, 32–52, 61–81, 109–129, 137–157, 171–191, 195–215, and 236–256; these read LILTLLAGAATFIGAFLGVLG, VLAFSLGFAAGIMLLISLMEM, GMSPVLGYGMFIIGLLGYFGL, AILLTLGISLHNFPEGIATFV, LGFGIALAVALHNIPEGLAVA, IFWAGISGMAEILGGVLAWLI, LVSPIVMAAIMAAVAGIMVAL, and GVLCGMSIMGLSLVILQTIGI. The Fe(2+) site is built by N120 and E123. Positions 123 and 148 each coordinate Zn(2+). Residues N149, E152, and E181 each contribute to the Fe(2+) site. E152 serves as a coordination point for Zn(2+).

This sequence belongs to the ZIP transporter (TC 2.A.5) family. ZupT subfamily.

The protein localises to the cell inner membrane. The catalysed reaction is Zn(2+)(in) = Zn(2+)(out). In terms of biological role, mediates zinc uptake. May also transport other divalent cations. This Salmonella heidelberg (strain SL476) protein is Zinc transporter ZupT.